A 301-amino-acid polypeptide reads, in one-letter code: Methionyl-tRNA formyltransferase (301 aa).

Residue 110–113 coordinates (6S)-5,6,7,8-tetrahydrofolate; it reads SLLP.

The protein belongs to the Fmt family.

It carries out the reaction L-methionyl-tRNA(fMet) + (6R)-10-formyltetrahydrofolate = N-formyl-L-methionyl-tRNA(fMet) + (6S)-5,6,7,8-tetrahydrofolate + H(+). Attaches a formyl group to the free amino group of methionyl-tRNA(fMet). The formyl group appears to play a dual role in the initiator identity of N-formylmethionyl-tRNA by promoting its recognition by IF2 and preventing the misappropriation of this tRNA by the elongation apparatus. The sequence is that of Methionyl-tRNA formyltransferase from Anaplasma phagocytophilum (strain HZ).